The following is a 133-amino-acid chain: Probable 4-amino-4-deoxy-L-arabinose-phosphoundecaprenol flippase subunit ArnF (133 aa).

The Cytoplasmic portion of the chain corresponds to Met1–Tyr5. Residues Leu6–Met26 form a helical membrane-spanning segment. The Periplasmic segment spans residues Ser27–Asn47. The chain crosses the membrane as a helical span at residues Ile48–Trp68. An EamA domain is found at Ile51–Gln125. Residues Leu69–Ala80 are Cytoplasmic-facing. Residues Tyr81–Phe101 traverse the membrane as a helical segment. Topologically, residues Gln102 to Glu103 are periplasmic. Residues Thr104–Ser124 traverse the membrane as a helical segment. Over Gln125–His133 the chain is Cytoplasmic.

It belongs to the ArnF family. As to quaternary structure, heterodimer of ArnE and ArnF.

The protein localises to the cell inner membrane. It participates in bacterial outer membrane biogenesis; lipopolysaccharide biosynthesis. Functionally, translocates 4-amino-4-deoxy-L-arabinose-phosphoundecaprenol (alpha-L-Ara4N-phosphoundecaprenol) from the cytoplasmic to the periplasmic side of the inner membrane. The protein is Probable 4-amino-4-deoxy-L-arabinose-phosphoundecaprenol flippase subunit ArnF of Proteus mirabilis (strain HI4320).